The primary structure comprises 74 residues: Cytochrome c oxidase subunit 6C (74 aa).

Topologically, residues 2-12 (STALAKPQMRG) are mitochondrial matrix. A helical transmembrane segment spans residues 13-53 (LLARRLRFHIVGAFMVSLGFATFYKFAVAEKRKKAYADFYR). Over 54–74 (NYDSMKDFEEMRKAGIFQSAK) the chain is Mitochondrial intermembrane.

It belongs to the cytochrome c oxidase subunit 6c family. In terms of assembly, component of the cytochrome c oxidase (complex IV, CIV), a multisubunit enzyme composed of 14 subunits. The complex is composed of a catalytic core of 3 subunits MT-CO1, MT-CO2 and MT-CO3, encoded in the mitochondrial DNA, and 11 supernumerary subunits COX4I1 (or COX4I2), COX5A, COX5B, COX6A2 (or COX6A1), COX6B1 (or COX6B2), COX6C, COX7A1 (or COX7A2), COX7B, COX7C, COX8B and NDUFA4, which are encoded in the nuclear genome. The complex exists as a monomer or a dimer and forms supercomplexes (SCs) in the inner mitochondrial membrane with NADH-ubiquinone oxidoreductase (complex I, CI) and ubiquinol-cytochrome c oxidoreductase (cytochrome b-c1 complex, complex III, CIII), resulting in different assemblies (supercomplex SCI(1)III(2)IV(1) and megacomplex MCI(2)III(2)IV(2)).

The protein localises to the mitochondrion inner membrane. It functions in the pathway energy metabolism; oxidative phosphorylation. Its function is as follows. Component of the cytochrome c oxidase, the last enzyme in the mitochondrial electron transport chain which drives oxidative phosphorylation. The respiratory chain contains 3 multisubunit complexes succinate dehydrogenase (complex II, CII), ubiquinol-cytochrome c oxidoreductase (cytochrome b-c1 complex, complex III, CIII) and cytochrome c oxidase (complex IV, CIV), that cooperate to transfer electrons derived from NADH and succinate to molecular oxygen, creating an electrochemical gradient over the inner membrane that drives transmembrane transport and the ATP synthase. Cytochrome c oxidase is the component of the respiratory chain that catalyzes the reduction of oxygen to water. Electrons originating from reduced cytochrome c in the intermembrane space (IMS) are transferred via the dinuclear copper A center (CU(A)) of subunit 2 and heme A of subunit 1 to the active site in subunit 1, a binuclear center (BNC) formed by heme A3 and copper B (CU(B)). The BNC reduces molecular oxygen to 2 water molecules using 4 electrons from cytochrome c in the IMS and 4 protons from the mitochondrial matrix. The sequence is that of Cytochrome c oxidase subunit 6C (COX6C) from Bos taurus (Bovine).